The sequence spans 437 residues: GTPase Obg (437 aa).

The 159-residue stretch at 2-160 (SMFLDTAKIK…RNLELELKVL (159 aa)) folds into the Obg domain. Positions 161–338 (ADVGLVGFPS…LLEATAELLE (178 aa)) constitute an OBG-type G domain. Residues 167-174 (GFPSVGKS), 192-196 (FTTIV), 214-217 (DLPG), 284-287 (NKMD), and 319-321 (SGI) each bind GTP. Mg(2+) contacts are provided by serine 174 and threonine 194. An OCT domain is found at 359–437 (GFNPDEPEFA…IGKFEFEFVD (79 aa)).

Belongs to the TRAFAC class OBG-HflX-like GTPase superfamily. OBG GTPase family. As to quaternary structure, monomer. Mg(2+) is required as a cofactor.

Its subcellular location is the cytoplasm. An essential GTPase which binds GTP, GDP and possibly (p)ppGpp with moderate affinity, with high nucleotide exchange rates and a fairly low GTP hydrolysis rate. Plays a role in control of the cell cycle, stress response, ribosome biogenesis and in those bacteria that undergo differentiation, in morphogenesis control. The protein is GTPase Obg of Streptococcus suis (strain 98HAH33).